A 470-amino-acid chain; its full sequence is ATP synthase subunit beta (470 aa).

ATP is bound at residue 151 to 158 (GGAGVGKT).

This sequence belongs to the ATPase alpha/beta chains family. F-type ATPases have 2 components, CF(1) - the catalytic core - and CF(0) - the membrane proton channel. CF(1) has five subunits: alpha(3), beta(3), gamma(1), delta(1), epsilon(1). CF(0) has three main subunits: a(1), b(2) and c(9-12). The alpha and beta chains form an alternating ring which encloses part of the gamma chain. CF(1) is attached to CF(0) by a central stalk formed by the gamma and epsilon chains, while a peripheral stalk is formed by the delta and b chains.

The protein resides in the cell membrane. The catalysed reaction is ATP + H2O + 4 H(+)(in) = ADP + phosphate + 5 H(+)(out). Functionally, produces ATP from ADP in the presence of a proton gradient across the membrane. The catalytic sites are hosted primarily by the beta subunits. The polypeptide is ATP synthase subunit beta (Mycoplasma mobile (strain ATCC 43663 / 163K / NCTC 11711) (Mesomycoplasma mobile)).